Here is a 373-residue protein sequence, read N- to C-terminus: MVSPGLDLELSFSQALQGFGLSEQAARLLWLPLPMLLVLVAAVVGVLVSVWLERKISAAVQQRIGPEYAGALGVLQPLADGLKLLVKEDIIPARADSLLFTLGPVLVVIPVIISWLIIPFGQNLLISNVGVGIFLWIAFSSIQPIGLLMSGYASNNKYSLLGGLRAAAQSISYEIPLALAVLAIVMMSNSLSTVDIVGQQTGAGILSWNIWRQPVGFLIFWICALAECERLPFDLPEAEEELVAGYQTEYAGMKFALFYLAGYINLVLSAVLVSVLYLGGWGFPIPVEWLAGWLNQPIDAPVIQVITGSVGIVMTVLKAYLLVFVAILLRWTTPRVRIDQLLDLGWKFLLPLSLVNLLVTAALKLAFPVAFGG.

The next 8 membrane-spanning stretches (helical) occupy residues 28-48 (LLWL…GVLV), 98-118 (LLFT…WLII), 129-149 (VGVG…GLLM), 167-187 (AAQS…IVMM), 205-225 (ILSW…ICAL), 267-287 (VLSA…PIPV), 309-329 (SVGI…AILL), and 348-368 (FLLP…LAFP).

This sequence belongs to the complex I subunit 1 family. As to quaternary structure, NDH-1 is composed of at least 11 different subunits.

Its subcellular location is the cellular thylakoid membrane. The catalysed reaction is a plastoquinone + NADH + (n+1) H(+)(in) = a plastoquinol + NAD(+) + n H(+)(out). It carries out the reaction a plastoquinone + NADPH + (n+1) H(+)(in) = a plastoquinol + NADP(+) + n H(+)(out). Its function is as follows. NDH-1 shuttles electrons from an unknown electron donor, via FMN and iron-sulfur (Fe-S) centers, to quinones in the respiratory and/or the photosynthetic chain. The immediate electron acceptor for the enzyme in this species is believed to be plastoquinone. Couples the redox reaction to proton translocation, and thus conserves the redox energy in a proton gradient. The polypeptide is NAD(P)H-quinone oxidoreductase subunit 1 (Parasynechococcus marenigrum (strain WH8102)).